A 233-amino-acid polypeptide reads, in one-letter code: Germin-like protein 3-7 (233 aa).

Residues 1 to 35 (MSSSSSMECTGNMSAAPLLVLTVAVLAVLASTCAA) form the signal peptide. The cysteines at positions 44 and 63 are disulfide-linked. Residues 77 to 225 (AGLAAAGSTD…SFQVDAEIIK (149 aa)) enclose the Cupin type-1 domain. Mn(2+) contacts are provided by histidine 125, histidine 127, glutamate 132, and histidine 171. The N-linked (GlcNAc...) asparagine glycan is linked to asparagine 178.

It belongs to the germin family. In terms of assembly, oligomer (believed to be a pentamer but probably hexamer).

It localises to the secreted. Its subcellular location is the extracellular space. The protein resides in the apoplast. May play a role in plant defense. Probably has no oxalate oxidase activity even if the active site is conserved. The sequence is that of Germin-like protein 3-7 (GER7) from Oryza sativa subsp. japonica (Rice).